Consider the following 158-residue polypeptide: NAD(P)H-quinone oxidoreductase subunit O, chloroplastic (158 aa).

A chloroplast-targeting transit peptide spans 1–38; it reads MAFSATVSQLSSLSTISSSLPISSRRLPHRSLPQFTVK. The tract at residues 33-70 is disordered; the sequence is PQFTVKAEAEKEKQSTQGKSDGEASPAATKTPKTLPKK. The segment covering 56-70 has biased composition (low complexity); the sequence is ASPAATKTPKTLPKK.

This sequence belongs to the NDH complex subunit O family. As to quaternary structure, part of the chloroplast NDH complex, composed of a mixture of chloroplast and nucleus encoded subunits. Component of the NDH subcomplex A, at least composed of ndhH, ndhI, ndhJ, ndhK, ndhL, ndhM, ndhN and ndhO.

The protein localises to the plastid. Its subcellular location is the chloroplast thylakoid membrane. The catalysed reaction is a plastoquinone + NADH + (n+1) H(+)(in) = a plastoquinol + NAD(+) + n H(+)(out). It catalyses the reaction a plastoquinone + NADPH + (n+1) H(+)(in) = a plastoquinol + NADP(+) + n H(+)(out). Its function is as follows. NDH shuttles electrons from NAD(P)H:plastoquinone, via FMN and iron-sulfur (Fe-S) centers, to quinones in the photosynthetic chain and possibly in a chloroplast respiratory chain. The immediate electron acceptor for the enzyme in this species is believed to be plastoquinone. Couples the redox reaction to proton translocation, and thus conserves the redox energy in a proton gradient. This chain is NAD(P)H-quinone oxidoreductase subunit O, chloroplastic, found in Arabidopsis thaliana (Mouse-ear cress).